Here is a 758-residue protein sequence, read N- to C-terminus: Microtubule-associated protein tau (758 aa).

Residues 1–26 (MAEPRQEFEVMEDHAGTYGLGDRKDQ) are compositionally biased toward basic and acidic residues. Residues 1 to 573 (MAEPRQEFEV…PVPMPDLKNV (573 aa)) are disordered. The residue at position 2 (A2) is an N-acetylalanine. Phosphotyrosine; by FYN is present on Y18. Residue Y29 is modified to Phosphotyrosine. K44 is covalently cross-linked (Glycyl lysine isopeptide (Lys-Gly) (interchain with G-Cter in ubiquitin)). A phosphoserine mark is found at S46 and S61. Residues 61 to 71 (SETSDAKSTPT) are compositionally biased toward polar residues. Phosphothreonine occurs at positions 69 and 71. K87 carries N-linked (Glc) (glycation) lysine; in PHF-tau; in vitro glycosylation. At T111 the chain carries Phosphothreonine. Composition is skewed to basic and acidic residues over residues 179-189 (EGGRHAPELLK) and 207-216 (GGKERPGSKE). The residue at position 214 (S214) is a Phosphoserine; by SGK1. Residues 217–228 (EVDEDRDVDESS) are compositionally biased toward acidic residues. Positions 314 to 323 (EQAHSEEHLG) are enriched in basic and acidic residues. Low complexity predominate over residues 324–340 (RAAFPGAPGEGPEARGP). Composition is skewed to basic and acidic residues over residues 344–356 (EDTK…EPSE) and 381–393 (KSKD…DKKA). The N-linked (Glc) (glycation) lysine; in PHF-tau; in vitro glycan is linked to K383. Low complexity predominate over residues 442 to 453 (VSSVTSRTGSSG). The segment covering 455–466 (KEMKLKGADGKT) has biased composition (basic and acidic residues). Residue K467 is glycosylated (N-linked (Glc) (glycation) lysine; in PHF-tau; in vitro). T470 bears the Phosphothreonine; by PDPK1 mark. Residue R472 is modified to Omega-N-methylarginine. K480 is a glycosylation site (N-linked (Glc) (glycation) lysine; in PHF-tau; in vitro). Position 480 is an N6,N6-dimethyllysine; alternate (K480). Position 480 is an N6-acetyllysine; alternate (K480). N484 is subject to Deamidated asparagine; in tau and PHF-tau; partial. T486 bears the Phosphothreonine mark. N-linked (Glc) (glycation) lysine; in PHF-tau; in vitro glycosylation occurs at K491. Positions 491 to 503 (KTPPAPKTPPSSG) are enriched in pro residues. At T492 the chain carries Phosphothreonine. T498 is modified (phosphothreonine; by PDPK1). S502, S508, and S512 each carry phosphoserine. A compositionally biased stretch (low complexity) spans 504–531 (EPPKSGDRSGYSSPGSPGTPGSRSRTPS). The residue at position 514 (Y514) is a Phosphotyrosine; by TTBK1. S515 and S516 each carry phosphoserine; by PDPK1 and TTBK1. Residue S519 is modified to Phosphoserine; by CK1, PDPK1 and TTBK1. Residue T522 is modified to Phosphothreonine; by CK1 and PDPK1. O-linked (GlcNAc) serine glycosylation is present at S525. Phosphothreonine; by BRSK1, BRSK2, DYRK2 and PDPK1 is present on T529. S531 bears the Phosphoserine; by PKA mark. T534 is subject to Phosphothreonine; by PDPK1. An N-linked (Glc) (glycation) lysine; in PHF-tau; in vitro glycan is attached at K542. K542 carries the N6-acetyllysine modification. T548 bears the Phosphothreonine; by GSK3-beta and PDPK1 mark. N-linked (Glc) (glycation) lysine; in PHF-tau; in vitro glycosylation is present at K551. Position 552 is a phosphoserine; by PDPK1 (S552). S554 is subject to Phosphoserine; by PHK. O-linked (GlcNAc) serine glycosylation occurs at S555. Tau/MAP repeat units lie at residues 561-591 (QTAP…GGGK), 592-622 (VQII…GGGS), 623-653 (VQIV…GGGQ), and 654-685 (VEVK…GGGN). The microtubule-binding domain stretch occupies residues 561–685 (QTAPVPMPDL…NITHVPGGGN (125 aa)). K571 participates in a covalent cross-link: Glycyl lysine isopeptide (Lys-Gly) (interchain with G-Cter in ubiquitin); in PHF-tau. K576 is a glycosylation site (N-linked (Glc) (glycation) lysine; in PHF-tau; in vitro). K576 bears the N6-acetyllysine; alternate mark. An N6-methyllysine; alternate modification is found at K576. K576 participates in a covalent cross-link: Glycyl lysine isopeptide (Lys-Gly) (interchain with G-Cter in ubiquitin); alternate. S579 bears the Phosphoserine; by MARK1, MARK2, MARK3, MARK4, BRSK1, BRSK2 and PHK mark. K584 participates in a covalent cross-link: Glycyl lysine isopeptide (Lys-Gly) (interchain with G-Cter in ubiquitin). N596 is subject to Deamidated asparagine; in tau and PHF-tau; partial. K597 and K598 each carry an N-linked (Glc) (glycation) lysine; in PHF-tau; in vitro glycan. K598 is subject to N6-acetyllysine; alternate. Residue K598 forms a Glycyl lysine isopeptide (Lys-Gly) (interchain with G-Cter in ubiquitin); alternate linkage. S602 carries the post-translational modification Phosphoserine; by PHK. K607 is subject to N6-acetyllysine. C608 and C639 are disulfide-bonded. S610 carries the phosphoserine modification. The residue at position 615 (K615) is an N6-acetyllysine; alternate. K615 participates in a covalent cross-link: Glycyl lysine isopeptide (Lys-Gly) (interchain with G-Cter in ubiquitin); alternate. Phosphoserine; by PHK is present on S622. K628 carries the N6,N6-dimethyllysine; alternate modification. Residues K628, K634, and K638 each carry the N6-acetyllysine; alternate modification. K628 is covalently cross-linked (Glycyl lysine isopeptide (Lys-Gly) (interchain with G-Cter in ubiquitin); in PHF-tau). Glycyl lysine isopeptide (Lys-Gly) (interchain with G-Cter in ubiquitin); alternate cross-links involve residues K634 and K638. S641 is modified (phosphoserine). Residues K648, K660, and K664 each carry the N6-acetyllysine; alternate modification. Glycyl lysine isopeptide (Lys-Gly) (interchain with G-Cter in ubiquitin); alternate cross-links involve residues K648, K660, and K664. Residue K664 is glycosylated (N-linked (Glc) (glycation) lysine; in PHF-tau; in vitro). R666 is modified (omega-N-methylarginine). S669 carries the post-translational modification Phosphoserine; by PHK. K670 carries N-linked (Glc) (glycation) lysine; in PHF-tau; in vitro glycosylation. A Glycyl lysine isopeptide (Lys-Gly) (interchain with G-Cter in ubiquitin); in PHF-tau cross-link involves residue K670. S673 carries the post-translational modification Phosphoserine. The N-linked (Glc) (glycation) lysine; in PHF-tau; in vitro glycan is linked to K686. K686 carries the N6-acetyllysine; alternate modification. Residue K686 forms a Glycyl lysine isopeptide (Lys-Gly) (interchain with G-Cter in ubiquitin); alternate linkage. A Glycyl lysine isopeptide (Lys-Gly) (interchain with G-Cter in ubiquitin) cross-link involves residue K692. Residue K702 is modified to N6-acetyllysine; alternate. A Glycyl lysine isopeptide (Lys-Gly) (interchain with G-Cter in ubiquitin); alternate cross-link involves residue K702. The residue at position 711 (Y711) is a Phosphotyrosine. S713 carries the phosphoserine; by CK1 and PDPK1 modification. The tract at residues 715-734 (VVSGDTSPRHLSNVSSTGSI) is disordered. S717 is subject to Phosphoserine; alternate. S717 carries an O-linked (GlcNAc) serine; alternate glycan. The span at 718–733 (GDTSPRHLSNVSSTGS) shows a compositional bias: polar residues. The residue at position 720 (T720) is a Phosphothreonine. The residue at position 721 (S721) is a Phosphoserine; by CK1 and PDPK1. S726 carries the phosphoserine modification. Phosphoserine; by CaMK2 and TTBK1 is present on S733. Residue S739 is modified to Phosphoserine; by PDPK1 and TTBK1. T744 is modified (phosphothreonine; by TTBK1).

As to quaternary structure, interacts with MARK1, MARK2, MARK3 and MARK4. Interacts with PSMC2 through SQSTM1. Interacts with SQSTM1 when polyubiquitinated. Interacts with FKBP4. Binds to CSNK1D. Interacts with SGK1. Interacts with EPM2A; the interaction dephosphorylates MAPT at Ser-396. Interacts with PIN1. Interacts with LRRK2. Interacts with LRP1, leading to endocytosis; this interaction is reduced in the presence of LRPAP1/RAP. Post-translationally, phosphorylation at serine and threonine residues in S-P or T-P motifs by proline-directed protein kinases (PDPK1, CDK1, CDK5, GSK3, MAPK) (only 2-3 sites per protein in interphase, seven-fold increase in mitosis, and in the form associated with paired helical filaments (PHF-tau)), and at serine residues in K-X-G-S motifs by MAP/microtubule affinity-regulating kinase (MARK1, MARK2, MARK3 or MARK4), causing detachment from microtubules, and their disassembly. Phosphorylation decreases with age. Phosphorylation within tau/MAP's repeat domain or in flanking regions seems to reduce tau/MAP's interaction with, respectively, microtubules or plasma membrane components. Phosphorylation on Ser-610, Ser-622, Ser-641 and Ser-673 in several isoforms during mitosis. Phosphorylation at Ser-548 by GSK3B reduces ability to bind and stabilize microtubules. Phosphorylation at Ser-579 by BRSK1 and BRSK2 in neurons affects ability to bind microtubules and plays a role in neuron polarization. Phosphorylated at Ser-554, Ser-579, Ser-602, Ser-606 and Ser-669 by PHK. Phosphorylation at Ser-214 by SGK1 mediates microtubule depolymerization and neurite formation in hippocampal neurons. There is a reciprocal down-regulation of phosphorylation and O-GlcNAcylation. Phosphorylation on Ser-717 completely abolishes the O-GlcNAcylation on this site, while phosphorylation on Ser-713 and Ser-721 reduces glycosylation by a factor of 2 and 4 respectively. Phosphorylation on Ser-721 is reduced by about 41.5% by GlcNAcylation on Ser-717. Dephosphorylated at several serine and threonine residues by the serine/threonine phosphatase PPP5C. In terms of processing, polyubiquitinated. Requires functional TRAF6 and may provoke SQSTM1-dependent degradation by the proteasome. PHF-tau can be modified by three different forms of polyubiquitination. 'Lys-48'-linked polyubiquitination is the major form, 'Lys-6'-linked and 'Lys-11'-linked polyubiquitination also occur. O-glycosylated. O-GlcNAcylation content is around 8.2%. There is reciprocal down-regulation of phosphorylation and O-GlcNAcylation. Phosphorylation on Ser-717 completely abolishes the O-GlcNAcylation on this site, while phosphorylation on Ser-713 and Ser-721 reduces O-GlcNAcylation by a factor of 2 and 4 respectively. O-GlcNAcylation on Ser-717 decreases the phosphorylation on Ser-721 by about 41.5%. Post-translationally, glycation of PHF-tau, but not normal brain TAU/MAPT. Glycation is a non-enzymatic post-translational modification that involves a covalent linkage between a sugar and an amino group of a protein molecule forming ketoamine. Subsequent oxidation, fragmentation and/or cross-linking of ketoamine leads to the production of advanced glycation endproducts (AGES). Glycation may play a role in stabilizing PHF aggregation leading to tangle formation in AD. As to expression, expressed in neurons. Isoform PNS-tau is expressed in the peripheral nervous system while the others are expressed in the central nervous system.

It is found in the cytoplasm. It localises to the cytosol. Its subcellular location is the cell membrane. The protein localises to the cytoskeleton. The protein resides in the cell projection. It is found in the axon. It localises to the dendrite. Its subcellular location is the secreted. Promotes microtubule assembly and stability, and might be involved in the establishment and maintenance of neuronal polarity. The C-terminus binds axonal microtubules while the N-terminus binds neural plasma membrane components, suggesting that tau functions as a linker protein between both. Axonal polarity is predetermined by TAU/MAPT localization (in the neuronal cell) in the domain of the cell body defined by the centrosome. The short isoforms allow plasticity of the cytoskeleton whereas the longer isoforms may preferentially play a role in its stabilization. This chain is Microtubule-associated protein tau, found in Homo sapiens (Human).